A 333-amino-acid polypeptide reads, in one-letter code: Porphobilinogen deaminase (333 aa).

Cys255 carries the S-(dipyrrolylmethanemethyl)cysteine modification.

This sequence belongs to the HMBS family. As to quaternary structure, monomer. The cofactor is dipyrromethane.

It catalyses the reaction 4 porphobilinogen + H2O = hydroxymethylbilane + 4 NH4(+). The protein operates within porphyrin-containing compound metabolism; protoporphyrin-IX biosynthesis; coproporphyrinogen-III from 5-aminolevulinate: step 2/4. In terms of biological role, tetrapolymerization of the monopyrrole PBG into the hydroxymethylbilane pre-uroporphyrinogen in several discrete steps. This Burkholderia vietnamiensis (strain G4 / LMG 22486) (Burkholderia cepacia (strain R1808)) protein is Porphobilinogen deaminase.